Reading from the N-terminus, the 313-residue chain is tRNA dimethylallyltransferase (313 aa).

9 to 16 lines the ATP pocket; sequence GPTATGKS. 11–16 contributes to the substrate binding site; the sequence is TATGKS.

The protein belongs to the IPP transferase family. In terms of assembly, monomer. Mg(2+) serves as cofactor.

The catalysed reaction is adenosine(37) in tRNA + dimethylallyl diphosphate = N(6)-dimethylallyladenosine(37) in tRNA + diphosphate. Its function is as follows. Catalyzes the transfer of a dimethylallyl group onto the adenine at position 37 in tRNAs that read codons beginning with uridine, leading to the formation of N6-(dimethylallyl)adenosine (i(6)A). The sequence is that of tRNA dimethylallyltransferase from Nocardia farcinica (strain IFM 10152).